A 508-amino-acid chain; its full sequence is Photosystem II CP47 reaction center protein (508 aa).

6 helical membrane-spanning segments follow: residues 21 to 36 (SVHI…WAGS), 101 to 115 (IVFS…IWHW), 140 to 156 (GIHL…FGAF), 203 to 218 (IAAG…FHLS), 237 to 252 (VLSS…AFVV), and 457 to 472 (SFAL…HGAR).

The protein belongs to the PsbB/PsbC family. PsbB subfamily. In terms of assembly, PSII is composed of 1 copy each of membrane proteins PsbA, PsbB, PsbC, PsbD, PsbE, PsbF, PsbH, PsbI, PsbJ, PsbK, PsbL, PsbM, PsbT, PsbX, PsbY, PsbZ, Psb30/Ycf12, at least 3 peripheral proteins of the oxygen-evolving complex and a large number of cofactors. It forms dimeric complexes. The cofactor is Binds multiple chlorophylls. PSII binds additional chlorophylls, carotenoids and specific lipids..

The protein resides in the plastid. It is found in the chloroplast thylakoid membrane. One of the components of the core complex of photosystem II (PSII). It binds chlorophyll and helps catalyze the primary light-induced photochemical processes of PSII. PSII is a light-driven water:plastoquinone oxidoreductase, using light energy to abstract electrons from H(2)O, generating O(2) and a proton gradient subsequently used for ATP formation. This is Photosystem II CP47 reaction center protein from Nuphar advena (Common spatterdock).